Reading from the N-terminus, the 820-residue chain is Probable ATP-dependent RNA helicase DDX23 (820 aa).

The span at 1 to 42 (MAGELADKKDRDASPSKEERKRSRTPDRERDRDRDRKSSPSK) shows a compositional bias: basic and acidic residues. Residues 1-244 (MAGELADKKD…QKIREEKDKS (244 aa)) form a disordered region. Residues S14 and S16 each carry the phosphoserine modification. Residues 43 to 65 (DRKRHRSRDRRRGGSRSRSRSRS) are compositionally biased toward basic residues. The segment covering 66 to 105 (KSAERERRHKERERDKERDRNKKDRDRDKDGHRRDKDRKR) has biased composition (basic and acidic residues). S107 and S109 each carry phosphoserine. 3 stretches are compositionally biased toward basic and acidic residues: residues 112–137 (RGKD…DKKP), 147–226 (LLAK…RETN), and 233–244 (GRQKIREEKDKS). The Q motif signature appears at 391–419 (RSWKDSSLPPHILEVIDKCGYKEPTPIQR). The 206-residue stretch at 422–627 (IPIGLQNRDI…RSYLRRPAVV (206 aa)) folds into the Helicase ATP-binding domain. Position 435–442 (435–442 (AETGSGKT)) interacts with ATP. A DEAD box motif is present at residues 549–552 (DEAD). Positions 651–799 (KRKKLLAILE…SCPPELANHP (149 aa)) constitute a Helicase C-terminal domain. Glycyl lysine isopeptide (Lys-Gly) (interchain with G-Cter in SUMO2) cross-links involve residues K686 and K811.

The protein belongs to the DEAD box helicase family. DDX23/PRP28 subfamily. The phosphorylated form (by SRPK2) is a component of the U4/U6-U5 tri-snRNP complex composed of the U4, U6 and U5 snRNAs and at least PRPF3, PRPF4, PRPF6, PRPF8, PRPF31, SNRNP200, TXNL4A, WDR57, SNRNP40, DDX23, CD2BP2, PPIH, SNU13, EFTUD2, SART1 and USP39. Identified in the spliceosome C complex. Interacts with ERBB4. Interacts with ERCC6. In terms of processing, in vitro phosphorylated by CLK1 and U1 snRNP-associated protein kinase. Phosphorylated by SRPK2 and this phosphorylation is required for its association with the tri-snRNP (U4/U6-U5 tri-small nuclear ribonucleoproteins) and subsequent spliceosomal B complex formation. May be phosphorylated by SRPK2 on Ser residues in the SR domain; the phosphorylation is required for the removal of inappropriate R-loops during transcription.

The protein localises to the nucleus. The protein resides in the chromosome. The enzyme catalyses ATP + H2O = ADP + phosphate + H(+). Involved in pre-mRNA splicing and its phosphorylated form (by SRPK2) is required for spliceosomal B complex formation. Independently of its spliceosome formation function, required for the suppression of incorrect R-loops formed during transcription; R-loops are composed of a DNA:RNA hybrid and the associated non-template single-stranded DNA. This is Probable ATP-dependent RNA helicase DDX23 from Homo sapiens (Human).